The sequence spans 190 residues: Molybdenum cofactor guanylyltransferase (190 aa).

GTP is bound by residues 10–12 (LAG), lysine 23, asparagine 51, aspartate 69, and aspartate 99. Aspartate 99 contributes to the Mg(2+) binding site.

Belongs to the MobA family. As to quaternary structure, monomer. Mg(2+) serves as cofactor.

Its subcellular location is the cytoplasm. It carries out the reaction Mo-molybdopterin + GTP + H(+) = Mo-molybdopterin guanine dinucleotide + diphosphate. In terms of biological role, transfers a GMP moiety from GTP to Mo-molybdopterin (Mo-MPT) cofactor (Moco or molybdenum cofactor) to form Mo-molybdopterin guanine dinucleotide (Mo-MGD) cofactor. This Mannheimia succiniciproducens (strain KCTC 0769BP / MBEL55E) protein is Molybdenum cofactor guanylyltransferase.